Reading from the N-terminus, the 90-residue chain is MAVKIRLTRMGSKKKPFYRINVADSRAPRDGRFIETVGTYNPLVEENQVTLKEERVLEWLSKGAQPSDTVRNILSKEGVMKKFHESKFSK.

This sequence belongs to the bacterial ribosomal protein bS16 family.

The sequence is that of Small ribosomal subunit protein bS16 from Streptococcus thermophilus (strain CNRZ 1066).